A 274-amino-acid polypeptide reads, in one-letter code: Bis(5'-nucleosyl)-tetraphosphatase, symmetrical (274 aa).

It belongs to the Ap4A hydrolase family.

The catalysed reaction is P(1),P(4)-bis(5'-adenosyl) tetraphosphate + H2O = 2 ADP + 2 H(+). Its function is as follows. Hydrolyzes diadenosine 5',5'''-P1,P4-tetraphosphate to yield ADP. In Buchnera aphidicola subsp. Acyrthosiphon pisum (strain 5A), this protein is Bis(5'-nucleosyl)-tetraphosphatase, symmetrical.